Consider the following 140-residue polypeptide: Protein PsiE homolog (140 aa).

4 helical membrane passes run 16–36 (IVLQ…LSVF), 57–77 (YHLI…VMII), 85–105 (HFPL…LIII), and 110–130 (PLDL…LFIA).

Belongs to the PsiE family.

The protein localises to the cell membrane. This is Protein PsiE homolog from Bacillus cereus (strain ATCC 14579 / DSM 31 / CCUG 7414 / JCM 2152 / NBRC 15305 / NCIMB 9373 / NCTC 2599 / NRRL B-3711).